We begin with the raw amino-acid sequence, 944 residues long: Translation initiation factor IF-2 (944 aa).

The segment covering leucine 55–proline 81 has biased composition (low complexity). The disordered stretch occupies residues leucine 55–arginine 329. Positions glycine 82 to threonine 92 are enriched in pro residues. Residues alanine 93 to valine 107 show a composition bias toward low complexity. Over residues alanine 123–alanine 135 the composition is skewed to basic and acidic residues. Low complexity-rich tracts occupy residues glutamate 136–serine 153 and glycine 211–arginine 222. The segment covering proline 223–proline 236 has biased composition (pro residues). Residues glycine 244–alanine 257 show a composition bias toward low complexity. Residues glycine 258 to arginine 269 are compositionally biased toward gly residues. The segment covering proline 270 to glycine 283 has biased composition (low complexity). The segment covering glycine 284–glycine 310 has biased composition (gly residues). Positions glycine 311–lysine 322 are enriched in basic residues. One can recognise a tr-type G domain in the interval isoleucine 437–arginine 611. Positions glycine 446–threonine 453 are G1. Position 446–453 (glycine 446–threonine 453) interacts with GTP. The segment at glycine 471–histidine 475 is G2. Residues aspartate 496–glycine 499 are G3. GTP contacts are provided by residues aspartate 496–histidine 500 and asparagine 550–aspartate 553. Residues asparagine 550–aspartate 553 are G4. Residues serine 586 to leucine 588 are G5.

It belongs to the TRAFAC class translation factor GTPase superfamily. Classic translation factor GTPase family. IF-2 subfamily.

It is found in the cytoplasm. Functionally, one of the essential components for the initiation of protein synthesis. Protects formylmethionyl-tRNA from spontaneous hydrolysis and promotes its binding to the 30S ribosomal subunits. Also involved in the hydrolysis of GTP during the formation of the 70S ribosomal complex. The polypeptide is Translation initiation factor IF-2 (Clavibacter michiganensis subsp. michiganensis (strain NCPPB 382)).